Here is a 667-residue protein sequence, read N- to C-terminus: Phosphomethylpyrimidine synthase (667 aa).

Substrate-binding positions include asparagine 235, methionine 264, tyrosine 293, histidine 329, 349–351 (SRG), 390–393 (DGMR), and glutamate 429. Residue histidine 433 coordinates Zn(2+). Position 456 (tyrosine 456) interacts with substrate. Position 497 (histidine 497) interacts with Zn(2+). Positions 577, 580, and 585 each coordinate [4Fe-4S] cluster. The segment at 618–642 (DSYTGSESDTAKRASQREQGMAQMS) is disordered.

The protein belongs to the ThiC family. Homodimer. Requires [4Fe-4S] cluster as cofactor.

It catalyses the reaction 5-amino-1-(5-phospho-beta-D-ribosyl)imidazole + S-adenosyl-L-methionine = 4-amino-2-methyl-5-(phosphooxymethyl)pyrimidine + CO + 5'-deoxyadenosine + formate + L-methionine + 3 H(+). The protein operates within cofactor biosynthesis; thiamine diphosphate biosynthesis. Catalyzes the synthesis of the hydroxymethylpyrimidine phosphate (HMP-P) moiety of thiamine from aminoimidazole ribotide (AIR) in a radical S-adenosyl-L-methionine (SAM)-dependent reaction. The chain is Phosphomethylpyrimidine synthase from Shewanella pealeana (strain ATCC 700345 / ANG-SQ1).